We begin with the raw amino-acid sequence, 251 residues long: MSGHSKWATTKHQKAVKDARRGKEFAKLIKNIEVAARTGGGDPAGNPTLYDAIQKAKKTSVPNDNIERARKRGAGEEAGGADWQTIMYEGYGPNGVAVLIECLSDNRNRAAGEVRVAMTRNGGSMADPGSVSYLFSRKGVVTLEKNSLSEDDVLTAVLEAGAEEVNDLGETFEVISEPTDLVAVRQALQEAGIDYESAEASFQPSMSVPVDVETARKVFKLVDALEDSDDVQNVYTNVDLSDEVLAALDED.

Residues 1-20 are disordered; it reads MSGHSKWATTKHQKAVKDAR.

Belongs to the TACO1 family.

It is found in the cytoplasm. The chain is Probable transcriptional regulatory protein MAB_2888c from Mycobacteroides abscessus (strain ATCC 19977 / DSM 44196 / CCUG 20993 / CIP 104536 / JCM 13569 / NCTC 13031 / TMC 1543 / L948) (Mycobacterium abscessus).